Here is a 191-residue protein sequence, read N- to C-terminus: Holliday junction branch migration complex subunit RuvA (191 aa).

The domain I stretch occupies residues 1–64 (MIGRITGTLA…EDAHLLYGFG (64 aa)). Residues 65 to 138 (SEVERAAFRE…KGKPVFAGAL (74 aa)) are domain II. Positions 138-141 (LASV) are flexible linker. The segment at 142 to 191 (PSAGASDDVRQALLALGYNERETAATVRELPAGLAVGEAIRQALRALSRA) is domain III.

Belongs to the RuvA family. In terms of assembly, homotetramer. Forms an RuvA(8)-RuvB(12)-Holliday junction (HJ) complex. HJ DNA is sandwiched between 2 RuvA tetramers; dsDNA enters through RuvA and exits via RuvB. An RuvB hexamer assembles on each DNA strand where it exits the tetramer. Each RuvB hexamer is contacted by two RuvA subunits (via domain III) on 2 adjacent RuvB subunits; this complex drives branch migration. In the full resolvosome a probable DNA-RuvA(4)-RuvB(12)-RuvC(2) complex forms which resolves the HJ.

It localises to the cytoplasm. In terms of biological role, the RuvA-RuvB-RuvC complex processes Holliday junction (HJ) DNA during genetic recombination and DNA repair, while the RuvA-RuvB complex plays an important role in the rescue of blocked DNA replication forks via replication fork reversal (RFR). RuvA specifically binds to HJ cruciform DNA, conferring on it an open structure. The RuvB hexamer acts as an ATP-dependent pump, pulling dsDNA into and through the RuvAB complex. HJ branch migration allows RuvC to scan DNA until it finds its consensus sequence, where it cleaves and resolves the cruciform DNA. This Thiobacillus denitrificans (strain ATCC 25259 / T1) protein is Holliday junction branch migration complex subunit RuvA.